The primary structure comprises 272 residues: Deaminated glutathione amidase (272 aa).

The 253-residue stretch at 1–253 (MKPYLAAALQ…PGLAIAEINP (253 aa)) folds into the CN hydrolase domain. The Proton acceptor role is filled by glutamate 43. Residue lysine 115 is the Proton donor of the active site. Catalysis depends on cysteine 158, which acts as the Nucleophile.

Belongs to the carbon-nitrogen hydrolase superfamily. NIT1/NIT2 family.

The enzyme catalyses N-(4-oxoglutaryl)-L-cysteinylglycine + H2O = L-cysteinylglycine + 2-oxoglutarate. Hydrolyzes deaminated glutathione (dGSH, 2-oxoglutaramate) to alpha-ketoglutarate (alpha-KG) and cysteinylglycine (specific activity 7.77 umol/min/mg), hydrolyzes alpha-ketoglutaramate (a-KGM, specific activity 2.13 umol/min/mg), has no activity on glutathione or L-glutamine. May function as a metabolite repair enzyme. This Synechocystis sp. (strain PCC 6803 / GT-S) protein is Deaminated glutathione amidase.